Reading from the N-terminus, the 150-residue chain is Transcriptional regulator MraZ (150 aa).

SpoVT-AbrB domains follow at residues 5–52 and 81–124; these read VTHL…PLPD and AHDL…DAEA.

Belongs to the MraZ family. In terms of assembly, forms oligomers.

The protein localises to the cytoplasm. It localises to the nucleoid. The polypeptide is Transcriptional regulator MraZ (Alkalilimnicola ehrlichii (strain ATCC BAA-1101 / DSM 17681 / MLHE-1)).